The sequence spans 562 residues: Potassium-transporting ATPase potassium-binding subunit (562 aa).

The next 10 membrane-spanning stretches (helical) occupy residues 5-25, 63-83, 132-152, 175-195, 250-270, 279-299, 379-399, 416-436, 483-503, and 526-546; these read AFLLIFGLLLTVLIVAQPLGS, AAAILALNLIGIVVLFVLLMA, GLTVQNFLSAASGIAVAFALI, LYVLLPLSLLLALFFVSQGVL, LSNIVQMLAILLIPTALCFAF, QGHALLWAMALIFIVAAAVVM, GLYGMLLFVLLTVFIAGLMIG, MTALAILIPPALVLLGTALAL, VLLAVAMLLGRFAVMVPVLAI, and LFIGMLIAIVLLIGALTFIPA.

It belongs to the KdpA family. As to quaternary structure, the system is composed of three essential subunits: KdpA, KdpB and KdpC.

The protein resides in the cell inner membrane. In terms of biological role, part of the high-affinity ATP-driven potassium transport (or Kdp) system, which catalyzes the hydrolysis of ATP coupled with the electrogenic transport of potassium into the cytoplasm. This subunit binds the periplasmic potassium ions and delivers the ions to the membrane domain of KdpB through an intramembrane tunnel. The polypeptide is Potassium-transporting ATPase potassium-binding subunit (Pectobacterium atrosepticum (strain SCRI 1043 / ATCC BAA-672) (Erwinia carotovora subsp. atroseptica)).